The primary structure comprises 205 residues: uncharacterized protein (205 aa).

The region spanning 11–71 (DKRQAEILEA…RIIETGLDEG (61 aa)) is the HTH tetR-type domain. The segment at residues 34–53 (TMKDVVEESGFSRGGVYLYF) is a DNA-binding region (H-T-H motif).

This is an uncharacterized protein from Bacillus subtilis (strain 168).